The sequence spans 25 residues: Pregnancy-associated glycoprotein 74 (25 aa).

2 N-linked (GlcNAc...) asparagine glycosylation sites follow: Asn4 and Asn21.

This sequence belongs to the peptidase A1 family. N-glycosylated. Placental cotyledons.

Its subcellular location is the secreted. The protein resides in the extracellular space. The polypeptide is Pregnancy-associated glycoprotein 74 (Bison bison (American bison)).